An 82-amino-acid polypeptide reads, in one-letter code: Chlorosome protein E (82 aa).

An a bacteriochlorophyll c-binding site is contributed by His26. Residues 55–82 (GSSGLKGSSPKYSGYATPSKEVKSRFEK) are disordered. Residues 59 to 69 (LKGSSPKYSGY) are compositionally biased toward low complexity.

Belongs to the BChl C/E-binding protein family.

The protein localises to the chlorosome. The protein resides in the chlorosome envelope. Component of the photosynthetic apparatus. The light harvesting B740 complex binds bacteriochlorophyll c. This is Chlorosome protein E (csmE) from Chlorobaculum tepidum (strain ATCC 49652 / DSM 12025 / NBRC 103806 / TLS) (Chlorobium tepidum).